The following is a 428-amino-acid chain: GTPase Obg (428 aa).

Residues 1 to 158 (MFVDQVKVYV…RYIVLELKVL (158 aa)) enclose the Obg domain. Positions 117–143 (AKGGRGGRGNTRFATPANPAPQLSEHG) are disordered. One can recognise an OBG-type G domain in the interval 159-329 (ADVGLVGFPS…LLFEVANQLE (171 aa)). GTP is bound by residues 165–172 (GFPSVGKS), 190–194 (FTTLV), 212–215 (DLPG), 282–285 (NKMD), and 310–312 (SAV). Positions 172 and 192 each coordinate Mg(2+). Residues 350 to 428 (TMEDEEIPFN…LLEFEFEFID (79 aa)) enclose the OCT domain.

It belongs to the TRAFAC class OBG-HflX-like GTPase superfamily. OBG GTPase family. In terms of assembly, monomer. Requires Mg(2+) as cofactor.

The protein resides in the cytoplasm. Its function is as follows. An essential GTPase which binds GTP, GDP and possibly (p)ppGpp with moderate affinity, with high nucleotide exchange rates and a fairly low GTP hydrolysis rate. Plays a role in control of the cell cycle, stress response, ribosome biogenesis and in those bacteria that undergo differentiation, in morphogenesis control. This Bacillus velezensis (strain DSM 23117 / BGSC 10A6 / LMG 26770 / FZB42) (Bacillus amyloliquefaciens subsp. plantarum) protein is GTPase Obg.